A 108-amino-acid chain; its full sequence is Small proline-rich protein 2H (108 aa).

A compositionally biased stretch (low complexity) spans 1 to 11; that stretch reads MSYQQQQCKQP. The tract at residues 1–22 is disordered; it reads MSYQQQQCKQPCQPPPVCPPPQ. Over residues 12 to 22 the composition is skewed to pro residues; it reads CQPPPVCPPPQ. 7 repeat units span residues 21 to 29, 30 to 38, 39 to 47, 48 to 56, 57 to 65, 66 to 74, and 75 to 83. A 7 X 9 AA tandem repeats of P-[KQ]-C-[PT]-E-P-C-P-P region spans residues 21-83; it reads PQCPEPCPPP…PPKCTEPCPP (63 aa). The tract at residues 83–108 is disordered; sequence PPSYQQKCPSVQPSPPCQQKCPPKNK. Over residues 87-108 the composition is skewed to low complexity; it reads QQKCPSVQPSPPCQQKCPPKNK.

This sequence belongs to the cornifin (SPRR) family. In terms of tissue distribution, expressed weakly in uterus.

The protein resides in the cytoplasm. Cross-linked envelope protein of keratinocytes. It is a keratinocyte protein that first appears in the cell cytosol, but ultimately becomes cross-linked to membrane proteins by transglutaminase. All that results in the formation of an insoluble envelope beneath the plasma membrane. This is Small proline-rich protein 2H (Sprr2h) from Mus musculus (Mouse).